We begin with the raw amino-acid sequence, 1025 residues long: RNA cytidine acetyltransferase (1025 aa).

Gly-287 to Leu-296 provides a ligand contact to ATP. N6-acetyllysine is present on Lys-426. Residue Arg-470 coordinates ATP. Residues Cys-558–Thr-753 enclose the N-acetyltransferase domain. Residues Ile-629 to Val-631 and Gln-636 to Ser-642 each bind acetyl-CoA. A required for localization to the nucleolus and midbody region spans residues Pro-702–Lys-1025. Thr-716 bears the Phosphothreonine mark. Arg-725 contacts acetyl-CoA. 3 positions are modified to phosphoserine: Ser-934, Ser-984, and Ser-987. The tract at residues Ser-990–Lys-1025 is disordered. The segment covering Glu-997–Asp-1018 has biased composition (basic and acidic residues).

It belongs to the RNA cytidine acetyltransferase family. NAT10 subfamily. Part of the small subunit (SSU) processome, composed of more than 70 proteins and the RNA chaperone small nucleolar RNA (snoRNA) U3. Interacts with THUMPD1. Interacts with SUN1 (via N-terminus). Interacts with TERT. Acetylation at Lys-426 is required to activation of rRNA transcription. May be autoacetylated; however ability to autoacetylate in vivo requires additional evidences.

The protein resides in the nucleus. It is found in the nucleolus. The protein localises to the midbody. The catalysed reaction is a cytidine in 18S rRNA + acetyl-CoA + ATP + H2O = an N(4)-acetylcytidine in 18S rRNA + ADP + phosphate + CoA + H(+). It carries out the reaction a cytidine in tRNA + acetyl-CoA + ATP + H2O = an N(4)-acetylcytidine in tRNA + ADP + phosphate + CoA + H(+). The enzyme catalyses a cytidine in mRNA + acetyl-CoA + ATP + H2O = an N(4)-acetylcytidine in mRNA + ADP + phosphate + CoA + H(+). Specifically inhibited by remodelin (4-[2-(2-cyclopentylidenehydrazinyl)-4-thiazolyl]-benzonitrile, monohydrobromide), a hydrobromide salt molecule. Remodelin can improve nuclear architecture, chromatin organization and fitness of cells from patients suffering from Hutchinson-Gilford progeria syndrome (HGPS); molecular mechanisms explaining the relation between NAT10 activity and nuclear architecture are however unclear. Functionally, RNA cytidine acetyltransferase that catalyzes the formation of N(4)-acetylcytidine (ac4C) modification on mRNAs, 18S rRNA and tRNAs. Catalyzes ac4C modification of a broad range of mRNAs, enhancing mRNA stability and translation. mRNA ac4C modification is frequently present within wobble cytidine sites and promotes translation efficiency. Mediates the formation of ac4C at position 1842 in 18S rRNA. May also catalyze the formation of ac4C at position 1337 in 18S rRNA. Required for early nucleolar cleavages of precursor rRNA at sites A0, A1 and A2 during 18S rRNA synthesis. Catalyzes the formation of ac4C in serine and leucine tRNAs. Requires the tRNA-binding adapter protein THUMPD1 for full tRNA acetyltransferase activity but not for 18S rRNA acetylation. In addition to RNA acetyltransferase activity, also able to acetylate lysine residues of proteins, such as histones, microtubules, p53/TP53 and MDM2, in vitro. The relevance of the protein lysine acetyltransferase activity is however unsure in vivo. Activates telomerase activity by stimulating the transcription of TERT, and may also regulate telomerase function by affecting the balance of telomerase subunit assembly, disassembly, and localization. Involved in the regulation of centrosome duplication by acetylating CENATAC during mitosis, promoting SASS6 proteasome degradation. Part of the small subunit (SSU) processome, first precursor of the small eukaryotic ribosomal subunit. During the assembly of the SSU processome in the nucleolus, many ribosome biogenesis factors, an RNA chaperone and ribosomal proteins associate with the nascent pre-rRNA and work in concert to generate RNA folding, modifications, rearrangements and cleavage as well as targeted degradation of pre-ribosomal RNA by the RNA exosome. This chain is RNA cytidine acetyltransferase, found in Homo sapiens (Human).